The chain runs to 724 residues: Degenerin mec-10 (724 aa).

Over 1 to 125 (MNRGPPNPRM…GQAPNSLYRA (125 aa)) the chain is Cytoplasmic. The chain crosses the membrane as a helical span at residues 126 to 146 (VWVFLLLICAIQFINQAVAVI). The Extracellular portion of the chain corresponds to 147–684 (QKYQKMDKIT…FGGHLGLWSG (538 aa)). 5 N-linked (GlcNAc...) asparagine glycosylation sites follow: asparagine 294, asparagine 370, asparagine 463, asparagine 605, and asparagine 624. A helical transmembrane segment spans residues 685 to 705 (VSVMTCCEFVCLVLELLYMAV). Residues 706 to 724 (THHITQERIRRRENAANEF) lie on the Cytoplasmic side of the membrane.

It belongs to the amiloride-sensitive sodium channel (TC 1.A.6) family. As to quaternary structure, the channel is probably composed of at least the mec-2, mec-4, mec-6 and mec-10 subunits.

The protein resides in the cell membrane. Its function is as follows. Amiloride-sensitive sodium channel subunit required for mechanosensory transduction (touch sensitivity). Negatively regulates the turning step of male mating behavior. The sequence is that of Degenerin mec-10 from Caenorhabditis briggsae.